The chain runs to 229 residues: Small ribosomal subunit protein mS23 (229 aa).

Belongs to the mitochondrion-specific ribosomal protein mS23 family. In terms of assembly, component of the mitochondrial small ribosomal subunit.

It is found in the mitochondrion. This is Small ribosomal subunit protein mS23 (RSM25) from Yarrowia lipolytica (strain CLIB 122 / E 150) (Yeast).